The sequence spans 257 residues: Chlorocatechol 1,2-dioxygenase (257 aa).

Tyr134, Tyr169, His194, and His196 together coordinate Fe cation.

It belongs to the intradiol ring-cleavage dioxygenase family. Fe(3+) serves as cofactor.

It catalyses the reaction 4-chlorocatechol + O2 = 3-chloro-cis,cis-muconate + 2 H(+). The enzyme catalyses 3,5-dichlorocatechol + O2 = (2E,4E)-2,4-dichloromuconate + 2 H(+). The sequence is that of Chlorocatechol 1,2-dioxygenase (clcA) from Rhodococcus opacus (Nocardia opaca).